The following is a 350-amino-acid chain: Methionine aminopeptidase 1D, chloroplastic/mitochondrial (350 aa).

A chloroplast and mitochondrion-targeting transit peptide spans 1 to 49 (MAGVKSLQPRLISSFLGNNSIRSTQPLIHLFRFDLGRRHVSMQLSRTFS). Glycine 50 carries the N-acetylglycine modification. The interval 71–90 (RLRPGNVSPRRPVPGHITKP) is disordered. Histidine 180 contacts substrate. Aspartate 197, aspartate 208, and histidine 271 together coordinate a divalent metal cation. A substrate-binding site is contributed by histidine 278. Positions 303 and 334 each coordinate a divalent metal cation.

It belongs to the peptidase M24A family. Methionine aminopeptidase type 1 subfamily. Requires Co(2+) as cofactor. It depends on Zn(2+) as a cofactor. The cofactor is Mn(2+). Fe(2+) is required as a cofactor. Ubiquitous. Preferentially expressed in green tissues.

The protein localises to the plastid. The protein resides in the chloroplast. It is found in the mitochondrion. The catalysed reaction is Release of N-terminal amino acids, preferentially methionine, from peptides and arylamides.. Removes the N-terminal methionine from nascent proteins. The N-terminal methionine is often cleaved when the second residue in the primary sequence is small and uncharged (Met-Ala-, Cys, Gly, Pro, Ser, Thr, or Val). This chain is Methionine aminopeptidase 1D, chloroplastic/mitochondrial (MAP1D), found in Arabidopsis thaliana (Mouse-ear cress).